The following is a 139-amino-acid chain: Actin-depolymerizing factor 3 (139 aa).

The ADF-H domain occupies Gly7–Arg139.

The protein belongs to the actin-binding proteins ADF family. Expressed in all tissues except pollen.

It is found in the cytoplasm. In terms of biological role, actin-depolymerizing protein. Severs actin filaments (F-actin) and binds to actin monomers. This is Actin-depolymerizing factor 3 (ADF3) from Zea mays (Maize).